We begin with the raw amino-acid sequence, 417 residues long: Adenosylhomocysteinase (417 aa).

3 residues coordinate substrate: threonine 53, aspartate 125, and glutamate 149. Residue 150–152 (TTT) coordinates NAD(+). Substrate-binding residues include lysine 179 and aspartate 183. NAD(+) is bound by residues asparagine 184, 213–218 (GYGWVG), glutamate 236, asparagine 271, 292–294 (AGH), and asparagine 339.

Belongs to the adenosylhomocysteinase family. The cofactor is NAD(+).

The protein resides in the cytoplasm. It carries out the reaction S-adenosyl-L-homocysteine + H2O = L-homocysteine + adenosine. It functions in the pathway amino-acid biosynthesis; L-homocysteine biosynthesis; L-homocysteine from S-adenosyl-L-homocysteine: step 1/1. Its function is as follows. May play a key role in the regulation of the intracellular concentration of adenosylhomocysteine. The chain is Adenosylhomocysteinase from Saccharolobus solfataricus (strain ATCC 35092 / DSM 1617 / JCM 11322 / P2) (Sulfolobus solfataricus).